Here is a 749-residue protein sequence, read N- to C-terminus: Catalase-peroxidase (749 aa).

The segment at residues 98-234 (WHAAGTYRVQ…LAASHMGLIY (137 aa)) is a cross-link (tryptophyl-tyrosyl-methioninium (Trp-Tyr) (with M-260)). The active-site Proton acceptor is His-99. The tryptophyl-tyrosyl-methioninium (Tyr-Met) (with W-98) cross-link spans 234 to 260 (YVNPEGPNGEPDPVAAAHDIRTTFGRM). His-275 contacts heme b.

The protein belongs to the peroxidase family. Peroxidase/catalase subfamily. As to quaternary structure, homodimer or homotetramer. Heme b is required as a cofactor. In terms of processing, formation of the three residue Trp-Tyr-Met cross-link is important for the catalase, but not the peroxidase activity of the enzyme.

The protein resides in the cytoplasm. It catalyses the reaction H2O2 + AH2 = A + 2 H2O. The catalysed reaction is 2 H2O2 = O2 + 2 H2O. Bifunctional enzyme with both catalase and broad-spectrum peroxidase activity. This Mycosarcoma maydis (Corn smut fungus) protein is Catalase-peroxidase.